The following is a 195-amino-acid chain: Orotate phosphoribosyltransferase (195 aa).

Position 117–125 (117–125 (EDITTTGGS)) interacts with 5-phospho-alpha-D-ribose 1-diphosphate. The orotate site is built by threonine 121 and arginine 149.

It belongs to the purine/pyrimidine phosphoribosyltransferase family. PyrE subfamily. Homodimer. It depends on Mg(2+) as a cofactor.

It carries out the reaction orotidine 5'-phosphate + diphosphate = orotate + 5-phospho-alpha-D-ribose 1-diphosphate. It participates in pyrimidine metabolism; UMP biosynthesis via de novo pathway; UMP from orotate: step 1/2. In terms of biological role, catalyzes the transfer of a ribosyl phosphate group from 5-phosphoribose 1-diphosphate to orotate, leading to the formation of orotidine monophosphate (OMP). This chain is Orotate phosphoribosyltransferase, found in Acidithiobacillus ferrooxidans (strain ATCC 53993 / BNL-5-31) (Leptospirillum ferrooxidans (ATCC 53993)).